Consider the following 1028-residue polypeptide: Contactin-3 (1028 aa).

Residues 1-19 (MMFPWKQLILLSFIGCLGG) form the signal peptide. Ig-like C2-type domains lie at 26 to 117 (PVFI…AKLQ), 122 to 208 (ENFK…ARVL), 227 to 313 (PKIE…GRLT), 318 to 402 (PHWV…AELK), 408 to 497 (PDFS…LVVT), and 499 to 593 (PTRI…ADLI). 5 cysteine pairs are disulfide-bonded: cysteine 50/cysteine 100, cysteine 144/cysteine 196, cysteine 249/cysteine 297, cysteine 339/cysteine 386, and cysteine 431/cysteine 479. Asparagine 65 and asparagine 193 each carry an N-linked (GlcNAc...) asparagine glycan. Residues asparagine 375, asparagine 468, and asparagine 489 are each glycosylated (N-linked (GlcNAc...) asparagine). A disulfide bridge connects residues cysteine 521 and cysteine 577. Fibronectin type-III domains lie at 600–698 (PPEN…TEEA), 703–800 (PPSE…SAEE), 805–901 (APSQ…TKKT), and 902–998 (PPSQ…TSMD). The disordered stretch occupies residues 684-713 (GEPSLPSEKVRTEEAVPEVPPSEVNGGGGS). Asparagine 765, asparagine 860, asparagine 895, asparagine 913, asparagine 931, and asparagine 956 each carry an N-linked (GlcNAc...) asparagine glycan. A lipid anchor (GPI-anchor amidated serine) is attached at serine 1002. Residues 1003-1028 (TSAISNVHPMSSYMPIVLFLIVYVLW) constitute a propeptide, removed in mature form.

This sequence belongs to the immunoglobulin superfamily. Contactin family. As to quaternary structure, interacts with PTPRG. In brain, it is expressed in frontal lobe, occipital lobe, cerebellum and amygdala.

The protein resides in the cell membrane. Its function is as follows. Contactins mediate cell surface interactions during nervous system development. Has some neurite outgrowth-promoting activity. The chain is Contactin-3 (CNTN3) from Homo sapiens (Human).